The following is a 309-amino-acid chain: Nucleoside kinase (309 aa).

Residues D16, G42, and N46 each coordinate substrate. Residue Q108 coordinates ATP. Residues 110 to 112 (SYF) and Q166 each bind substrate. ATP-binding positions include N189 and 217–223 (KTYGKEG). D249 contacts substrate. The active-site Proton acceptor is D249.

The protein belongs to the carbohydrate kinase PfkB family. Homodimer. Mg(2+) is required as a cofactor.

Its function is as follows. Catalyzes the phosphorylation of a wide range of nucleosides to yield nucleoside monophosphates, using ATP, ITP or GTP as phosphate donor. This Methanothermobacter thermautotrophicus (strain ATCC 29096 / DSM 1053 / JCM 10044 / NBRC 100330 / Delta H) (Methanobacterium thermoautotrophicum) protein is Nucleoside kinase.